The primary structure comprises 162 residues: Endoribonuclease YbeY (162 aa).

Residues H127, H131, and H137 each coordinate Zn(2+).

Belongs to the endoribonuclease YbeY family. Zn(2+) is required as a cofactor.

Its subcellular location is the cytoplasm. Its function is as follows. Single strand-specific metallo-endoribonuclease involved in late-stage 70S ribosome quality control and in maturation of the 3' terminus of the 16S rRNA. The chain is Endoribonuclease YbeY from Acetivibrio thermocellus (strain ATCC 27405 / DSM 1237 / JCM 9322 / NBRC 103400 / NCIMB 10682 / NRRL B-4536 / VPI 7372) (Clostridium thermocellum).